A 1492-amino-acid polypeptide reads, in one-letter code: Neogenin (1492 aa).

The first 36 residues, methionine 1–glycine 36, serve as a signal peptide directing secretion. Topologically, residues arginine 37 to leucine 1136 are extracellular. Ig-like C2-type domains lie at proline 63–threonine 158, proline 163–lysine 249, proline 254–threonine 347, and proline 352–isoleucine 437. A glycan (N-linked (GlcNAc...) asparagine) is linked at asparagine 84. Intrachain disulfides connect cysteine 85–cysteine 140, cysteine 184–cysteine 232, and cysteine 281–cysteine 331. An N-linked (GlcNAc...) asparagine glycan is attached at asparagine 221. Asparagine 337 is a glycosylation site (N-linked (GlcNAc...) asparagine). A disulfide bridge connects residues cysteine 373 and cysteine 421. Fibronectin type-III domains lie at alanine 472–glutamate 566, proline 572–aspartate 662, alanine 667–serine 762, valine 772–threonine 862, proline 887–threonine 986, and proline 988–alanine 1085. Asparagine 501 and asparagine 520 each carry an N-linked (GlcNAc...) asparagine glycan. N-linked (GlcNAc...) asparagine glycans are attached at residues asparagine 670 and asparagine 746. N-linked (GlcNAc...) asparagine glycosylation is present at asparagine 940. The interval glycine 1072–threonine 1128 is disordered. Residues proline 1083–proline 1092 are compositionally biased toward basic and acidic residues. The segment covering serine 1118–threonine 1128 has biased composition (polar residues). Residues leucine 1137–phenylalanine 1157 traverse the membrane as a helical segment. The Cytoplasmic segment spans residues cysteine 1158 to alanine 1492. Disordered stretches follow at residues proline 1205–serine 1237, proline 1266–serine 1300, and serine 1321–proline 1396. Phosphoserine occurs at positions 1209 and 1225. The span at proline 1222–serine 1237 shows a compositional bias: polar residues. The residue at position 1229 (threonine 1229) is a Phosphothreonine. 2 stretches are compositionally biased toward polar residues: residues serine 1321–threonine 1353 and alanine 1361–proline 1380. Position 1432 is a phosphoserine (serine 1432). Threonine 1435 is subject to Phosphothreonine. 3 positions are modified to phosphoserine: serine 1463, serine 1465, and serine 1466.

Belongs to the immunoglobulin superfamily. DCC family. As to quaternary structure, interacts with BMP2, BMP4, BMP6, and BMP7. Interacts with RGMA and RGMB. Interacts with MYO10. Widely expressed.

It localises to the cell membrane. Its function is as follows. Multi-functional cell surface receptor regulating cell adhesion in many diverse developmental processes, including neural tube and mammary gland formation, myogenesis and angiogenesis. Receptor for members of the BMP, netrin, and repulsive guidance molecule (RGM) families. Netrin-Neogenin interactions result in a chemoattractive axon guidance response and cell-cell adhesion, the interaction between NEO1/Neogenin and RGMa and RGMb induces a chemorepulsive response. The chain is Neogenin from Mus musculus (Mouse).